Consider the following 201-residue polypeptide: 3-isopropylmalate dehydratase small subunit (201 aa).

This sequence belongs to the LeuD family. LeuD type 1 subfamily. In terms of assembly, heterodimer of LeuC and LeuD.

The enzyme catalyses (2R,3S)-3-isopropylmalate = (2S)-2-isopropylmalate. It functions in the pathway amino-acid biosynthesis; L-leucine biosynthesis; L-leucine from 3-methyl-2-oxobutanoate: step 2/4. In terms of biological role, catalyzes the isomerization between 2-isopropylmalate and 3-isopropylmalate, via the formation of 2-isopropylmaleate. This Brucella anthropi (strain ATCC 49188 / DSM 6882 / CCUG 24695 / JCM 21032 / LMG 3331 / NBRC 15819 / NCTC 12168 / Alc 37) (Ochrobactrum anthropi) protein is 3-isopropylmalate dehydratase small subunit.